Reading from the N-terminus, the 293-residue chain is Protease HtpX (293 aa).

2 helical membrane-spanning segments follow: residues 4–24 (IALF…VLSL) and 34–54 (GLLI…LLMS). Histidine 139 lines the Zn(2+) pocket. Glutamate 140 is a catalytic residue. Residue histidine 143 coordinates Zn(2+). The next 2 membrane-spanning stretches (helical) occupy residues 158 to 178 (VVNT…AGFM) and 193 to 213 (LIYF…ASII). A Zn(2+)-binding site is contributed by glutamate 222.

Belongs to the peptidase M48B family. Requires Zn(2+) as cofactor.

Its subcellular location is the cell inner membrane. This chain is Protease HtpX, found in Enterobacter sp. (strain 638).